The following is a 91-amino-acid chain: MLFRLFTIPSIALGVLGSAATLPPREESANCRSVCCDAIVPSIFPSGRVGINCHWDELLDCGFSGQVDSCCEAIVPFGVKDGTGIRCSRRQ.

Positions 1–17 (MLFRLFTIPSIALGVLG) are cleaved as a signal peptide. Intrachain disulfides connect C31–C70, C35–C61, C36–C53, and C71–C87.

It belongs to the fungal hydrophobin family. As to quaternary structure, self-assembles to form functional amyloid fibrils called rodlets. Self-assembly into fibrillar rodlets occurs spontaneously at hydrophobic:hydrophilic interfaces and the rodlets further associate laterally to form amphipathic monolayers. As to expression, expressed in conidia.

The protein resides in the secreted. The protein localises to the cell wall. In terms of biological role, aerial growth, conidiation, and dispersal of filamentous fungi in the environment rely upon a capability of their secreting small amphipathic proteins called hydrophobins (HPBs) with low sequence identity. Class I can self-assemble into an outermost layer of rodlet bundles on aerial cell surfaces, conferring cellular hydrophobicity that supports fungal growth, development and dispersal; whereas Class II form highly ordered films at water-air interfaces through intermolecular interactions but contribute nothing to the rodlet structure. HYD3 is a class I hydrophobin located on the conidial surface that activates specifically the humoral and cellular immunity of Metarhizium acridum's own host insect, Locusta migratoria manilensis (Meyen) but not that of other non-host insects. Improves the resistance of locusts to both specialist and generalist fungal pathogens (wide host range) when topically applied to the cuticle, but has no effect on the fungal resistance of other insects, including Spodoptera frugiperda and Galleria mellonella. This is Class I hydrophobin 3 from Metarhizium acridum (strain CQMa 102).